The primary structure comprises 112 residues: Integration host factor subunit alpha (112 aa).

It belongs to the bacterial histone-like protein family. In terms of assembly, heterodimer of an alpha and a beta chain.

This protein is one of the two subunits of integration host factor, a specific DNA-binding protein that functions in genetic recombination as well as in transcriptional and translational control. This is Integration host factor subunit alpha from Rhizobium etli (strain CIAT 652).